We begin with the raw amino-acid sequence, 333 residues long: Protein RecA (333 aa).

Position 69 to 76 (69 to 76 (GPESSGKT)) interacts with ATP.

Belongs to the RecA family.

It localises to the cytoplasm. Its function is as follows. Can catalyze the hydrolysis of ATP in the presence of single-stranded DNA, the ATP-dependent uptake of single-stranded DNA by duplex DNA, and the ATP-dependent hybridization of homologous single-stranded DNAs. It interacts with LexA causing its activation and leading to its autocatalytic cleavage. The sequence is that of Protein RecA from Mesoplasma florum (strain ATCC 33453 / NBRC 100688 / NCTC 11704 / L1) (Acholeplasma florum).